The following is a 171-amino-acid chain: uncharacterized protein (171 aa).

The PfpI endopeptidase domain occupies 3 to 171; that stretch reads KKVAIILANE…FNREIVKQLQ (169 aa).

It belongs to the peptidase C56 family.

This is an uncharacterized protein from Staphylococcus aureus (strain COL).